Consider the following 158-residue polypeptide: Cyclic pyranopterin monophosphate synthase (158 aa).

Substrate-binding positions include 74–76 (MCH) and 112–113 (ME). Asp-127 is a catalytic residue.

Belongs to the MoaC family. In terms of assembly, homohexamer; trimer of dimers.

It carries out the reaction (8S)-3',8-cyclo-7,8-dihydroguanosine 5'-triphosphate = cyclic pyranopterin phosphate + diphosphate. It functions in the pathway cofactor biosynthesis; molybdopterin biosynthesis. Functionally, catalyzes the conversion of (8S)-3',8-cyclo-7,8-dihydroguanosine 5'-triphosphate to cyclic pyranopterin monophosphate (cPMP). The chain is Cyclic pyranopterin monophosphate synthase from Thermoanaerobacter sp. (strain X514).